The primary structure comprises 736 residues: 1,4-alpha-glucan branching enzyme GlgB (736 aa).

D417 functions as the Nucleophile in the catalytic mechanism. E470 serves as the catalytic Proton donor.

It belongs to the glycosyl hydrolase 13 family. GlgB subfamily. As to quaternary structure, monomer.

The enzyme catalyses Transfers a segment of a (1-&gt;4)-alpha-D-glucan chain to a primary hydroxy group in a similar glucan chain.. It functions in the pathway glycan biosynthesis; glycogen biosynthesis. Functionally, catalyzes the formation of the alpha-1,6-glucosidic linkages in glycogen by scission of a 1,4-alpha-linked oligosaccharide from growing alpha-1,4-glucan chains and the subsequent attachment of the oligosaccharide to the alpha-1,6 position. This Pseudomonas putida (strain ATCC 47054 / DSM 6125 / CFBP 8728 / NCIMB 11950 / KT2440) protein is 1,4-alpha-glucan branching enzyme GlgB.